Here is a 131-residue protein sequence, read N- to C-terminus: Histone H2A.1 (131 aa).

Serine 2 bears the N-acetylserine mark. Residues lysine 5 and lysine 8 each carry the N6-acetyllysine modification. Glutamine 106 carries the post-translational modification N5-methylglutamine. Residue serine 128 is modified to Phosphoserine. Residues 128–129 (SQ) carry the [ST]-Q motif motif.

This sequence belongs to the histone H2A family. The nucleosome is a histone octamer containing two molecules each of H2A, H2B, H3 and H4 assembled in one H3-H4 heterotetramer and two H2A-H2B heterodimers. The octamer wraps approximately 147 bp of DNA. Post-translationally, phosphorylated to form H2AS128ph (gamma-H2A) in response to DNA double-strand breaks (DSBs) generated by exogenous genotoxic agents and by stalled replication forks. Phosphorylation is dependent on the DNA damage checkpoint kinases MEC1/ATR and TEL1/ATM, spreads on either side of a detected DSB site and may mark the surrounding chromatin for recruitment of proteins required for DNA damage signaling and repair. Gamma-H2A is removed from the DNA prior to the strand invasion-primer extension step of the repair process and subsequently dephosphorylated by PPH3, a component of the histone H2A phosphatase complex (HTP-C). Dephosphorylation is necessary for efficient recovery from the DNA damage checkpoint. In terms of processing, acetylated by ESA1 to form H2AK4ac and H2AK7ac.

It localises to the nucleus. Its subcellular location is the chromosome. Its function is as follows. Core component of nucleosome which plays a central role in DNA double strand break (DSB) repair. Nucleosomes wrap and compact DNA into chromatin, limiting DNA accessibility to the cellular machineries which require DNA as a template. Histones thereby play a central role in transcription regulation, DNA repair, DNA replication and chromosomal stability. DNA accessibility is regulated via a complex set of post-translational modifications of histones, also called histone code, and nucleosome remodeling. The protein is Histone H2A.1 (HTA1) of Candida glabrata (strain ATCC 2001 / BCRC 20586 / JCM 3761 / NBRC 0622 / NRRL Y-65 / CBS 138) (Yeast).